Reading from the N-terminus, the 135-residue chain is Small ribosomal subunit protein bS6 (135 aa).

A disordered region spans residues 98–135; that stretch reads EASPMAKAKDERDARRAAISERSSEADEVEENAEESAE. Positions 104 to 122 are enriched in basic and acidic residues; that stretch reads KAKDERDARRAAISERSSE. Positions 123 to 135 are enriched in acidic residues; that stretch reads ADEVEENAEESAE.

Belongs to the bacterial ribosomal protein bS6 family.

In terms of biological role, binds together with bS18 to 16S ribosomal RNA. In Shewanella amazonensis (strain ATCC BAA-1098 / SB2B), this protein is Small ribosomal subunit protein bS6.